The sequence spans 501 residues: Cilia- and flagella-associated protein 45 (501 aa).

The stretch at 75–114 (MTAEDVAAAKREAEAKREQLQAVSKARKEKMLKLEEEAKK) forms a coiled coil.

The protein belongs to the CFAP45 family.

The protein resides in the cell projection. Its subcellular location is the cilium. It is found in the flagellum. In Chlamydomonas reinhardtii (Chlamydomonas smithii), this protein is Cilia- and flagella-associated protein 45.